The following is a 198-amino-acid chain: dCTP deaminase (198 aa).

DCTP contacts are provided by residues 99 to 104 (RSSLGR), 125 to 127 (TLE), and Q144. Residue E127 is the Proton donor/acceptor of the active site.

It belongs to the dCTP deaminase family. Homotrimer.

It carries out the reaction dCTP + H2O + H(+) = dUTP + NH4(+). The protein operates within pyrimidine metabolism; dUMP biosynthesis; dUMP from dCTP (dUTP route): step 1/2. Catalyzes the deamination of dCTP to dUTP. The polypeptide is dCTP deaminase (Rhodopirellula baltica (strain DSM 10527 / NCIMB 13988 / SH1)).